Here is a 725-residue protein sequence, read N- to C-terminus: Putative oligopeptide transporter YGL114W (725 aa).

The next 9 membrane-spanning stretches (helical) occupy residues 28–48 (ATIA…QFGL), 134–154 (FREL…FAVP), 254–274 (IIIL…SYFV), 353–373 (WILW…FIVV), 449–469 (ISGC…LFGI), 472–492 (IPLY…ILGI), 564–584 (FCAQ…MYLC), 644–664 (YGYG…GIFN), and 697–717 (IVFS…NMLF).

Belongs to the oligopeptide OPT transporter family.

The protein localises to the membrane. In Saccharomyces cerevisiae (strain ATCC 204508 / S288c) (Baker's yeast), this protein is Putative oligopeptide transporter YGL114W.